Reading from the N-terminus, the 386-residue chain is Na(+)/H(+) antiporter NhaA (386 aa).

11 helical membrane-spanning segments follow: residues 10-30 (MGSA…IFAN), 58-78 (LLHW…GLEV), 94-114 (IFPA…YYLI), 124-144 (GWAI…ALLG), 154-174 (FLLA…AVFF), 176-196 (EELS…LITL), 199-219 (MKVG…AAVL), 253-273 (ILTP…NAGV), 283-303 (IFST…PLGV), 327-347 (VFAI…LAGL), and 361-381 (LSRL…YLLL).

The protein belongs to the NhaA Na(+)/H(+) (TC 2.A.33) antiporter family.

The protein resides in the cell inner membrane. The enzyme catalyses Na(+)(in) + 2 H(+)(out) = Na(+)(out) + 2 H(+)(in). In terms of biological role, na(+)/H(+) antiporter that extrudes sodium in exchange for external protons. The protein is Na(+)/H(+) antiporter NhaA of Mannheimia succiniciproducens (strain KCTC 0769BP / MBEL55E).